Consider the following 298-residue polypeptide: Elongation factor Ts (298 aa).

Residues T80–V83 form an involved in Mg(2+) ion dislocation from EF-Tu region.

This sequence belongs to the EF-Ts family.

It localises to the cytoplasm. In terms of biological role, associates with the EF-Tu.GDP complex and induces the exchange of GDP to GTP. It remains bound to the aminoacyl-tRNA.EF-Tu.GTP complex up to the GTP hydrolysis stage on the ribosome. This Acidovorax sp. (strain JS42) protein is Elongation factor Ts.